We begin with the raw amino-acid sequence, 508 residues long: Ras association domain-containing protein 10 (508 aa).

Residues 1 to 133 (MDPSEKKISV…VRFVLVRSEA (133 aa)) form the Ras-associating domain. Disordered stretches follow at residues 51-81 (RRGL…AMPP) and 186-221 (KLNR…ESAS). Residues 66–78 (EPPDENDEDDDDA) show a composition bias toward acidic residues. Low complexity predominate over residues 195–214 (PSSPCSSTSSSTASSCSSSA). Coiled coils occupy residues 235–266 (QDHT…DRMR) and 319–358 (LEEL…NQRW). Residues 473–508 (GLAKSCPGNDEDSDTGLSSMHSQDSDSVPPVCESLV) are disordered. Residues 487 to 498 (TGLSSMHSQDSD) are compositionally biased toward polar residues.

As to expression, expressed in neural progenitor cells (at protein level).

Its subcellular location is the cytoplasm. It is found in the cytosol. The protein localises to the cytoskeleton. The protein resides in the microtubule organizing center. It localises to the centrosome. Its subcellular location is the spindle pole. Its function is as follows. Plays an important role in regulating embryonic neurogenesis. The protein is Ras association domain-containing protein 10 (Rassf10) of Mus musculus (Mouse).